Consider the following 368-residue polypeptide: tRNA-specific 2-thiouridylase MnmA (368 aa).

ATP-binding positions include 11–18 (GMSGGVDS) and methionine 37. The interval 97-99 (NPD) is interaction with target base in tRNA. Residue cysteine 102 is the Nucleophile of the active site. Cysteines 102 and 199 form a disulfide. Glycine 127 is an ATP binding site. The interval 149–151 (KDQ) is interaction with tRNA. The active-site Cysteine persulfide intermediate is cysteine 199. Residues 311-312 (RY) form an interaction with tRNA region.

Belongs to the MnmA/TRMU family. In terms of assembly, interacts with TusE.

Its subcellular location is the cytoplasm. The catalysed reaction is S-sulfanyl-L-cysteinyl-[protein] + uridine(34) in tRNA + AH2 + ATP = 2-thiouridine(34) in tRNA + L-cysteinyl-[protein] + A + AMP + diphosphate + H(+). Functionally, catalyzes the 2-thiolation of uridine at the wobble position (U34) of tRNA(Lys), tRNA(Glu) and tRNA(Gln), leading to the formation of s(2)U34, the first step of tRNA-mnm(5)s(2)U34 synthesis. Sulfur is provided by IscS, via a sulfur-relay system. Binds ATP and its substrate tRNAs. In Shigella boydii serotype 4 (strain Sb227), this protein is tRNA-specific 2-thiouridylase MnmA.